We begin with the raw amino-acid sequence, 352 residues long: Phosphate acyltransferase (352 aa).

Basic and acidic residues predominate over residues 328–339 (ESFPGDAREREG). Positions 328–352 (ESFPGDAREREGAQAPDAGTERVAS) are disordered.

It belongs to the PlsX family. Homodimer. Probably interacts with PlsY.

The protein resides in the cytoplasm. It carries out the reaction a fatty acyl-[ACP] + phosphate = an acyl phosphate + holo-[ACP]. Its pathway is lipid metabolism; phospholipid metabolism. In terms of biological role, catalyzes the reversible formation of acyl-phosphate (acyl-PO(4)) from acyl-[acyl-carrier-protein] (acyl-ACP). This enzyme utilizes acyl-ACP as fatty acyl donor, but not acyl-CoA. The sequence is that of Phosphate acyltransferase from Geobacter sp. (strain M21).